We begin with the raw amino-acid sequence, 132 residues long: Small ribosomal subunit protein uS8 (132 aa).

Belongs to the universal ribosomal protein uS8 family. As to quaternary structure, part of the 30S ribosomal subunit. Contacts proteins S5 and S12.

In terms of biological role, one of the primary rRNA binding proteins, it binds directly to 16S rRNA central domain where it helps coordinate assembly of the platform of the 30S subunit. The polypeptide is Small ribosomal subunit protein uS8 (Corynebacterium kroppenstedtii (strain DSM 44385 / JCM 11950 / CIP 105744 / CCUG 35717)).